We begin with the raw amino-acid sequence, 111 residues long: Ig heavy chain V-III region HPC76 (111 aa).

Residues 1 to 110 (ESGGGLVQPG…WGQGTTLTVS (110 aa)) form the Ig-like domain.

This chain is Ig heavy chain V-III region HPC76, found in Mus musculus (Mouse).